The following is a 302-amino-acid chain: Ribosomal RNA small subunit methyltransferase H (302 aa).

Residues G43–H45, D62, F89, D105, and H112 each bind S-adenosyl-L-methionine. Residues E276–N302 form a disordered region.

This sequence belongs to the methyltransferase superfamily. RsmH family.

The protein localises to the cytoplasm. The catalysed reaction is cytidine(1402) in 16S rRNA + S-adenosyl-L-methionine = N(4)-methylcytidine(1402) in 16S rRNA + S-adenosyl-L-homocysteine + H(+). Its function is as follows. Specifically methylates the N4 position of cytidine in position 1402 (C1402) of 16S rRNA. In Nostoc sp. (strain PCC 7120 / SAG 25.82 / UTEX 2576), this protein is Ribosomal RNA small subunit methyltransferase H.